Reading from the N-terminus, the 20-residue chain is Pregnancy-associated glycoprotein 60H (20 aa).

Asn4 is a glycosylation site (N-linked (GlcNAc...) asparagine).

This sequence belongs to the peptidase A1 family. As to expression, chorionic epithelium (trophectoderm) and placental cotyledons.

Its subcellular location is the secreted. The protein localises to the extracellular space. The sequence is that of Pregnancy-associated glycoprotein 60H from Bison bonasus (European bison).